A 142-amino-acid chain; its full sequence is Deoxyuridine 5'-triphosphate nucleotidohydrolase (142 aa).

Residues 62 to 64 (RSG), asparagine 75, and 79 to 81 (TID) each bind substrate.

This sequence belongs to the dUTPase family. Mg(2+) is required as a cofactor.

It carries out the reaction dUTP + H2O = dUMP + diphosphate + H(+). The protein operates within pyrimidine metabolism; dUMP biosynthesis; dUMP from dCTP (dUTP route): step 2/2. In terms of biological role, this enzyme is involved in nucleotide metabolism: it produces dUMP, the immediate precursor of thymidine nucleotides and it decreases the intracellular concentration of dUTP so that uracil cannot be incorporated into DNA. The chain is Deoxyuridine 5'-triphosphate nucleotidohydrolase from Picosynechococcus sp. (strain ATCC 27264 / PCC 7002 / PR-6) (Agmenellum quadruplicatum).